The chain runs to 364 residues: MSNAIESLGSLWGPLLVLGQIGLFTLVLLLSIAFLLLLDRKVWAGVMMRKGPNVVGPFGLLQSFADFGKFLLKEIVIPAGANKAVFILAPILTCTLAFVTWAAIPVAPGTATGTSWVIANLNVGVLYLFAISSLGVYGIIMGGWASNSKYPFLGALRSAAQMVSYEVSIGFVIVTVILLVGSMNLTTIVNNQDGGIQNWHVFSFQYFPLIVVMVPMFVIFFISALAETNRPPFDLPEAESELVAGYQVEYGSTPYLLFMLGEYLNIVLMCAMMTILFLGGWHGPISLGPELTANLPPLLLSLSGLAWFMGKVLFCFFLFALVKAIVPRYRYDQLMRLGWKIFLPTSLAAVIIVAGYVTFVGGLS.

8 consecutive transmembrane segments (helical) span residues 15 to 35 (LLVL…IAFL), 84 to 104 (AVFI…WAAI), 123 to 143 (VGVL…IMGG), 169 to 189 (IGFV…TTIV), 206 to 226 (YFPL…SALA), 257 to 277 (LFML…TILF), 302 to 322 (LSGL…FALV), and 341 to 361 (IFLP…TFVG).

This sequence belongs to the complex I subunit 1 family. As to quaternary structure, NDH-1 is composed of 14 different subunits. Subunits NuoA, H, J, K, L, M, N constitute the membrane sector of the complex.

The protein localises to the cell inner membrane. The catalysed reaction is a quinone + NADH + 5 H(+)(in) = a quinol + NAD(+) + 4 H(+)(out). NDH-1 shuttles electrons from NADH, via FMN and iron-sulfur (Fe-S) centers, to quinones in the respiratory chain. The immediate electron acceptor for the enzyme in this species is believed to be ubiquinone. Couples the redox reaction to proton translocation (for every two electrons transferred, four hydrogen ions are translocated across the cytoplasmic membrane), and thus conserves the redox energy in a proton gradient. This subunit may bind ubiquinone. This chain is NADH-quinone oxidoreductase subunit H, found in Hyphomonas neptunium (strain ATCC 15444).